Here is a 437-residue protein sequence, read N- to C-terminus: Phosphomethylpyrimidine synthase (437 aa).

Residues Asn69, Met98, Tyr127, His163, 185-187 (SRG), 226-229 (DACR), and Glu265 each bind substrate. His269 is a Zn(2+) binding site. Tyr292 lines the substrate pocket. Zn(2+) is bound at residue His333. The [4Fe-4S] cluster site is built by Cys409, Cys412, and Cys416.

The protein belongs to the ThiC family. Requires [4Fe-4S] cluster as cofactor.

The catalysed reaction is 5-amino-1-(5-phospho-beta-D-ribosyl)imidazole + S-adenosyl-L-methionine = 4-amino-2-methyl-5-(phosphooxymethyl)pyrimidine + CO + 5'-deoxyadenosine + formate + L-methionine + 3 H(+). It functions in the pathway cofactor biosynthesis; thiamine diphosphate biosynthesis. In terms of biological role, catalyzes the synthesis of the hydroxymethylpyrimidine phosphate (HMP-P) moiety of thiamine from aminoimidazole ribotide (AIR) in a radical S-adenosyl-L-methionine (SAM)-dependent reaction. The protein is Phosphomethylpyrimidine synthase of Clostridium botulinum (strain 657 / Type Ba4).